Here is a 293-residue protein sequence, read N- to C-terminus: tRNA-cytidine(32) 2-sulfurtransferase (293 aa).

The PP-loop motif signature appears at 62–67 (SGGKDS). Cys137, Cys140, and Cys228 together coordinate [4Fe-4S] cluster.

The protein belongs to the TtcA family. As to quaternary structure, homodimer. The cofactor is Mg(2+). [4Fe-4S] cluster is required as a cofactor.

It localises to the cytoplasm. The enzyme catalyses cytidine(32) in tRNA + S-sulfanyl-L-cysteinyl-[cysteine desulfurase] + AH2 + ATP = 2-thiocytidine(32) in tRNA + L-cysteinyl-[cysteine desulfurase] + A + AMP + diphosphate + H(+). It functions in the pathway tRNA modification. Catalyzes the ATP-dependent 2-thiolation of cytidine in position 32 of tRNA, to form 2-thiocytidine (s(2)C32). The sulfur atoms are provided by the cysteine/cysteine desulfurase (IscS) system. In Brucella abortus (strain S19), this protein is tRNA-cytidine(32) 2-sulfurtransferase.